A 158-amino-acid polypeptide reads, in one-letter code: Protein Smg homolog (158 aa).

Belongs to the Smg family.

This is Protein Smg homolog from Alteromonas mediterranea (strain DSM 17117 / CIP 110805 / LMG 28347 / Deep ecotype).